The following is a 512-amino-acid chain: MMLSEQAQKWFPTHVQVTVLQAKDLKPKGKSGTNDTYTIIQLGKEKYSTSVAEKTLEPVWKEEASFELPGLLIQGSPEKYILFLIVMHRSLVGLDKFLGQVAINLNDIFEDKQRRKTEWFRLESKQGKRIKNRGEIKVNIQFMRNNMTASMFDLSMKDKTRSPFAKLKDKMKGRKNDGTFSDTSSAIIPSTHMPDANSEFSSGEIQMKSKPKKPFLLGPQRLSSAHSMSDLSGSHMSSEKLKAGTIGQTHLLGHQLDSFGTVPESGSLKSPHRRTLSFDTSKMNQPDSIVDEGELCFGRQNDPFTNVTASLPQKFATLPRKKNPFEESSETWDSSMNLFSKPIEIRKENKREKREKVSLFERVTGKKDSRRSDKLNNGGSDSPCDLKSPNAFSENRQDYFDYESTNPFTAKFRASNIMPSSSFHMSPTSNEDLRKIPDSNPFDATAGYRSLTYEEVLQELVKHKELLRRKDTHIRELEDYIDNLLVRVMEETPSILRVPYEPSRKAGKFSNS.

The 120-residue stretch at 1 to 120 (MMLSEQAQKW…DKQRRKTEWF (120 aa)) folds into the C2 domain. The necessary for its cellular translocation to the plasma membrane stretch occupies residues 15-102 (VQVTVLQAKD…GLDKFLGQVA (88 aa)). Disordered stretches follow at residues 169 to 239 (DKMK…MSSE) and 262 to 285 (VPESGSLKSPHRRTLSFDTSKMNQ). Positions 178 to 188 (GTFSDTSSAII) are enriched in polar residues. Positions 226-236 (HSMSDLSGSHM) are enriched in low complexity. Serine 227 bears the Phosphoserine; by MARK2 mark. Serine 277 carries the post-translational modification Phosphoserine. Positions 323-325 (NPF) match the NPF 1 motif. Over residues 361–374 (ERVTGKKDSRRSDK) the composition is skewed to basic and acidic residues. The disordered stretch occupies residues 361-392 (ERVTGKKDSRRSDKLNNGGSDSPCDLKSPNAF). 2 consecutive short sequence motifs (NPF) follow at residues 406–408 (NPF) and 440–442 (NPF). An FIP-RBD domain is found at 437-499 (PDSNPFDATA…EETPSILRVP (63 aa)). The necessary for interaction with AP2A1, RAB11A, subcellular location, endocytosis activity and homooligomerization stretch occupies residues 465–512 (ELLRRKDTHIRELEDYIDNLLVRVMEETPSILRVPYEPSRKAGKFSNS).

As to quaternary structure, homooligomerizes in a Rab11-independent manner. Forms a heterooligomeric complex with RAB11FIP4. Interacts with AP2A1, MYO5B, RAB25 and REPS1. Interacts with RAB11A and RAB11B (activated GTP-bound form). Interacts with NPC1L1. Interacts (via NPF motifs) with EHD1 and EHD3. Interacts with TICAM2; this interaction directs RAB11FIP2 to the phagosome. Interacts with RAB14 and RAB25 (GTP-bound forms). Phosphorylation at Ser-227 by MARK2 regulates epithelial cell polarity.

It is found in the cell projection. Its subcellular location is the phagocytic cup. It localises to the cell membrane. The protein localises to the recycling endosome membrane. In terms of biological role, a Rab11 effector binding preferentially phosphatidylinositol 3,4,5-trisphosphate (PtdInsP3) and phosphatidic acid (PA) and acting in the regulation of the transport of vesicles from the endosomal recycling compartment (ERC) to the plasma membrane. Involved in insulin granule exocytosis. Also involved in receptor-mediated endocytosis and membrane trafficking of recycling endosomes, probably originating from clathrin-coated vesicles. Required in a complex with MYO5B and RAB11 for the transport of NPC1L1 to the plasma membrane. Also acts as a regulator of cell polarity. Plays an essential role in phagocytosis through a mechanism involving TICAM2, RAC1 and CDC42 Rho GTPases for controlling actin-dynamics. In Homo sapiens (Human), this protein is Rab11 family-interacting protein 2 (RAB11FIP2).